The primary structure comprises 280 residues: Phosphatidylserine decarboxylase proenzyme (280 aa).

Residues Asp90, His146, and Ser247 each act as charge relay system; for autoendoproteolytic cleavage activity in the active site. Residue Ser247 is the Schiff-base intermediate with substrate; via pyruvic acid; for decarboxylase activity of the active site. Position 247 is a pyruvic acid (Ser); by autocatalysis (Ser247).

The protein belongs to the phosphatidylserine decarboxylase family. PSD-B subfamily. Prokaryotic type I sub-subfamily. As to quaternary structure, heterodimer of a large membrane-associated beta subunit and a small pyruvoyl-containing alpha subunit. Pyruvate is required as a cofactor. Is synthesized initially as an inactive proenzyme. Formation of the active enzyme involves a self-maturation process in which the active site pyruvoyl group is generated from an internal serine residue via an autocatalytic post-translational modification. Two non-identical subunits are generated from the proenzyme in this reaction, and the pyruvate is formed at the N-terminus of the alpha chain, which is derived from the carboxyl end of the proenzyme. The autoendoproteolytic cleavage occurs by a canonical serine protease mechanism, in which the side chain hydroxyl group of the serine supplies its oxygen atom to form the C-terminus of the beta chain, while the remainder of the serine residue undergoes an oxidative deamination to produce ammonia and the pyruvoyl prosthetic group on the alpha chain. During this reaction, the Ser that is part of the protease active site of the proenzyme becomes the pyruvoyl prosthetic group, which constitutes an essential element of the active site of the mature decarboxylase.

It localises to the cell membrane. The enzyme catalyses a 1,2-diacyl-sn-glycero-3-phospho-L-serine + H(+) = a 1,2-diacyl-sn-glycero-3-phosphoethanolamine + CO2. The protein operates within phospholipid metabolism; phosphatidylethanolamine biosynthesis; phosphatidylethanolamine from CDP-diacylglycerol: step 2/2. Functionally, catalyzes the formation of phosphatidylethanolamine (PtdEtn) from phosphatidylserine (PtdSer). This Myxococcus xanthus (strain DK1622) protein is Phosphatidylserine decarboxylase proenzyme.